The primary structure comprises 1197 residues: DNA-directed RNA polymerase subunit beta (1197 aa).

A compositionally biased stretch (polar residues) spans 581 to 597; it reads QANSPLNDDGSFTNPTV. Disordered regions lie at residues 581–603 and 1172–1197; these read QANS…RHGD and EKPD…EENV.

This sequence belongs to the RNA polymerase beta chain family. In terms of assembly, the RNAP catalytic core consists of 2 alpha, 1 beta, 1 beta' and 1 omega subunit. When a sigma factor is associated with the core the holoenzyme is formed, which can initiate transcription.

It catalyses the reaction RNA(n) + a ribonucleoside 5'-triphosphate = RNA(n+1) + diphosphate. Its function is as follows. DNA-dependent RNA polymerase catalyzes the transcription of DNA into RNA using the four ribonucleoside triphosphates as substrates. In Oenococcus oeni (strain ATCC BAA-331 / PSU-1), this protein is DNA-directed RNA polymerase subunit beta.